Here is a 109-residue protein sequence, read N- to C-terminus: Fluoride-specific ion channel FluC 1 (109 aa).

The next 4 membrane-spanning stretches (helical) occupy residues 1 to 21 (MVIV…YFFS), 29 to 49 (LPLG…VFYN), 55 to 75 (EVYA…STLN), and 87 to 107 (VFYS…FLGI). Na(+)-binding residues include Gly66 and Thr69.

This sequence belongs to the fluoride channel Fluc/FEX (TC 1.A.43) family.

Its subcellular location is the cell membrane. The enzyme catalyses fluoride(in) = fluoride(out). Its activity is regulated as follows. Na(+) is not transported, but it plays an essential structural role and its presence is essential for fluoride channel function. Its function is as follows. Fluoride-specific ion channel. Important for reducing fluoride concentration in the cell, thus reducing its toxicity. The chain is Fluoride-specific ion channel FluC 1 from Streptococcus pneumoniae serotype 4 (strain ATCC BAA-334 / TIGR4).